The sequence spans 85 residues: CRISPR-associated endoribonuclease Cas2 2 (85 aa).

Asp-8 provides a ligand contact to Mg(2+).

The protein belongs to the CRISPR-associated endoribonuclease Cas2 protein family. Homodimer, forms a heterotetramer with a Cas1 homodimer. Mg(2+) serves as cofactor.

Its function is as follows. CRISPR (clustered regularly interspaced short palindromic repeat), is an adaptive immune system that provides protection against mobile genetic elements (viruses, transposable elements and conjugative plasmids). CRISPR clusters contain sequences complementary to antecedent mobile elements and target invading nucleic acids. CRISPR clusters are transcribed and processed into CRISPR RNA (crRNA). Functions as a ssRNA-specific endoribonuclease. Involved in the integration of spacer DNA into the CRISPR cassette. This Chloroflexus aurantiacus (strain ATCC 29366 / DSM 635 / J-10-fl) protein is CRISPR-associated endoribonuclease Cas2 2.